The primary structure comprises 257 residues: Phosphate import ATP-binding protein PstB (257 aa).

The ABC transporter domain occupies 11–252 (LEVRDLNFFY…PQKKATEDYI (242 aa)). Residue 43-50 (GPSGCGKS) participates in ATP binding.

The protein belongs to the ABC transporter superfamily. Phosphate importer (TC 3.A.1.7) family. The complex is composed of two ATP-binding proteins (PstB), two transmembrane proteins (PstC and PstA) and a solute-binding protein (PstS).

The protein resides in the cell inner membrane. The catalysed reaction is phosphate(out) + ATP + H2O = ADP + 2 phosphate(in) + H(+). In terms of biological role, part of the ABC transporter complex PstSACB involved in phosphate import. Responsible for energy coupling to the transport system. This is Phosphate import ATP-binding protein PstB from Chromobacterium violaceum (strain ATCC 12472 / DSM 30191 / JCM 1249 / CCUG 213 / NBRC 12614 / NCIMB 9131 / NCTC 9757 / MK).